Consider the following 96-residue polypeptide: Redox-responsive transcriptional regulator WhiB3 (96 aa).

The 4Fe-4S Wbl-type domain maps to 22–86 (LCRGVDSSMF…GGLSESEREL (65 aa)). [4Fe-4S] cluster is bound by residues cysteine 23, cysteine 53, cysteine 56, and cysteine 62.

The protein belongs to the WhiB family. Requires [4Fe-4S] cluster as cofactor. The Fe-S cluster can be nitrosylated by nitric oxide (NO). In terms of processing, upon Fe-S cluster removal intramolecular disulfide bonds are formed.

It is found in the cytoplasm. In terms of biological role, a redox-sensitive transcriptional regulator. Maintains intracellular redox homeostasis by regulating catabolic metabolism and polyketide biosynthesis. Regulates expression of the redox buffer ergothioneine (ERG). In concert with myothiol (MSH), another redox buffer, responds to low pH leading to acid resistance. The apo- but not holo-form probably binds DNA. The chain is Redox-responsive transcriptional regulator WhiB3 (whiB3) from Mycolicibacterium smegmatis (strain ATCC 700084 / mc(2)155) (Mycobacterium smegmatis).